The primary structure comprises 354 residues: Rhodopsin (354 aa).

The Extracellular portion of the chain corresponds to 1–36 (MNGTEGPYFYIPMVNTTGIVRSPYDYPQYYLVNPAA). N-linked (GlcNAc...) asparagine glycosylation is found at Asn2 and Asn15. A helical membrane pass occupies residues 37–61 (YAALGAYMFFLILVGFPINFLTLYV). Topologically, residues 62–73 (TIEHKKLRTPLN) are cytoplasmic. The chain crosses the membrane as a helical span at residues 74–96 (YILLNLAVANLFMVFGGFTTTMY). At 97–110 (TSMHGYFVLGRLGC) the chain is on the extracellular side. Cys110 and Cys187 are oxidised to a cystine. The helical transmembrane segment at 111-133 (NLEGFFATLGGEIALWSLVVLAV) threads the bilayer. Positions 134–136 (ERW) match the 'Ionic lock' involved in activated form stabilization motif. The Cytoplasmic portion of the chain corresponds to 134–152 (ERWMVVCKPISNFRFGENH). The helical transmembrane segment at 153 to 173 (AIMGLAMTWLMASACAVPPLV) threads the bilayer. Residues 174–202 (GWSRYIPEGMQCSCGVDYYTRAEGFNNES) are Extracellular-facing. A glycan (N-linked (GlcNAc...) asparagine) is linked at Asn200. A helical transmembrane segment spans residues 203 to 224 (FVVYMFCCHFMIPLIIVFFCYG). Residues 225–252 (RLLCAVKEAAAAQQESETTQRAEREVTR) are Cytoplasmic-facing. The helical transmembrane segment at 253-274 (MVVIMVIAFLVCWLPYASVAWW) threads the bilayer. Topologically, residues 275–286 (IFTHQGSEFGPV) are extracellular. The chain crosses the membrane as a helical span at residues 287 to 308 (FMTIPAFFAKSSSIYNPMIYIC). Lys296 carries the post-translational modification N6-(retinylidene)lysine. Topologically, residues 309-354 (MNKQFRNCMITTLCCGKNPFEEEEGASSTASKTEASSVSSSSVSPA) are cytoplasmic. Residues Cys322 and Cys323 are each lipidated (S-palmitoyl cysteine). The interval 329–354 (EEEEGASSTASKTEASSVSSSSVSPA) is disordered. Low complexity predominate over residues 334 to 354 (ASSTASKTEASSVSSSSVSPA).

The protein belongs to the G-protein coupled receptor 1 family. Opsin subfamily. In terms of processing, phosphorylated on some or all of the serine and threonine residues present in the C-terminal region. Post-translationally, contains one covalently linked retinal chromophore.

The protein resides in the membrane. Its subcellular location is the cell projection. It is found in the cilium. It localises to the photoreceptor outer segment. Photoreceptor required for image-forming vision at low light intensity. While most salt water fish species use retinal as chromophore, most freshwater fish use 3-dehydroretinal, or a mixture of retinal and 3-dehydroretinal. Light-induced isomerization of 11-cis to all-trans retinal triggers a conformational change that activates signaling via G-proteins. Subsequent receptor phosphorylation mediates displacement of the bound G-protein alpha subunit by arrestin and terminates signaling. This Mullus surmuletus (Striped red mullet) protein is Rhodopsin (rho).